A 206-amino-acid chain; its full sequence is Large ribosomal subunit protein uL4 (206 aa).

The protein belongs to the universal ribosomal protein uL4 family. Part of the 50S ribosomal subunit.

Functionally, one of the primary rRNA binding proteins, this protein initially binds near the 5'-end of the 23S rRNA. It is important during the early stages of 50S assembly. It makes multiple contacts with different domains of the 23S rRNA in the assembled 50S subunit and ribosome. In terms of biological role, forms part of the polypeptide exit tunnel. This Xanthobacter autotrophicus (strain ATCC BAA-1158 / Py2) protein is Large ribosomal subunit protein uL4.